The primary structure comprises 270 residues: B3 domain-containing protein Os03g0212300 (270 aa).

2 consecutive DNA-binding regions (TF-B3) follow at residues 13–110 (FEFF…FDET) and 158–265 (VTLR…RKAD).

It localises to the nucleus. This Oryza sativa subsp. japonica (Rice) protein is B3 domain-containing protein Os03g0212300.